We begin with the raw amino-acid sequence, 1074 residues long: DNA annealing helicase and endonuclease ZRANB3 (1074 aa).

The region spanning 46 to 208 is the Helicase ATP-binding domain; the sequence is TFALRRDGRC…FMQIEALFPQ (163 aa). Residues 46-481 form a DNA annealing helicase activity region; it reads TFALRRDGRC…GRKEKLQAEE (436 aa). ATP is bound at residue 59–66; the sequence is DEMGLGKT. Positions 157-160 match the DEAH box motif; the sequence is DESH. The Helicase C-terminal domain occupies 325–481; sequence AVKDYIKMML…GRKEKLQAEE (157 aa). The short motif at 519-526 is the PIP-box element; sequence QRDIRSFF. Ser566 carries the phosphoserine modification. Residues 617–647 form a RanBP2-type zinc finger; the sequence is FCGEGWQCAFCTYINNSVLPYCEMCENPRGG. The interval 659 to 719 is disordered; it reads QNKNKNEKDD…RLTPQPGDEQ (61 aa). 2 stretches are compositionally biased toward basic and acidic residues: residues 662–674 and 696–711; these read NKNEKDDSQDTSK and AKSKEEISTTESEDRL. Positions 1006-1046 constitute an HNH domain; that stretch reads PGEGHFWQVDHIKPVSGGGGQCSLDNLQTLCTVCHRERTAQ. The tract at residues 1006 to 1074 is endonuclease activity; sequence PGEGHFWQVD…SDITRFLVKK (69 aa). The APIM motif signature appears at 1069 to 1073; that stretch reads RFLVK.

The protein belongs to the SNF2/RAD54 helicase family. In terms of assembly, interacts (via PIP-box and RanBP2-type zinc finger) with PCNA (when PCNA is polyubiquitinated via 'Lys-63'-linked polyubiquitin).

It is found in the nucleus. Its subcellular location is the chromosome. Its function is as follows. DNA annealing helicase and endonuclease required to maintain genome stability at stalled or collapsed replication forks by facilitating fork restart and limiting inappropriate recombination that could occur during template switching events. Recruited to the sites of stalled DNA replication by polyubiquitinated PCNA and acts as a structure-specific endonuclease that cleaves the replication fork D-loop intermediate, generating an accessible 3'-OH group in the template of the leading strand, which is amenable to extension by DNA polymerase. In addition to endonuclease activity, also catalyzes the fork regression via annealing helicase activity in order to prevent disintegration of the replication fork and the formation of double-strand breaks. The polypeptide is DNA annealing helicase and endonuclease ZRANB3 (ZRANB3) (Bos taurus (Bovine)).